Here is a 4466-residue protein sequence, read N- to C-terminus: Dynein beta chain, ciliary (4466 aa).

Positions 1-1813 are stem; that stretch reads MADVVDPRLE…YANICDAQFK (1813 aa). 154 to 161 provides a ligand contact to ATP; sequence AGQVKGKT. 4 coiled-coil regions span residues 733–805, 1036–1056, 1306–1337, and 1443–1468; these read TVLE…WTKQ, TLDQ…EADE, WLEI…AWDA, and LLKS…MTSK. 4 AAA regions span residues 1814–2035, 2095–2316, 2422–2669, and 2767–3016; these read YSYE…VLVV, KVVK…VRFK, ELDP…VFQG, and TYNE…ERRY. Residues 1852–1859, 2133–2140, 2460–2467, and 2805–2812 contribute to the ATP site; these read GPAGTGKT, GNAGTGKS, GNAGLGKS, and GVGGSGKQ. Coiled coils occupy residues 3033–3092, 3263–3325, and 3573–3642; these read SLLS…QVVG, EPKR…SRTI, and QERP…EEAK. The tract at residues 3033 to 3325 is stalk; the sequence is SLLSMKSKEL…QEAEATSRTI (293 aa). 2 AAA regions span residues 3409–3636 and 3846–4072; these read LTDD…EISV and VRNF…VLYN.

The protein belongs to the dynein heavy chain family. As to quaternary structure, consists of at least two heavy chains (alpha and beta), three intermediate chains and several light chains.

The protein localises to the cell projection. It localises to the cilium. Its subcellular location is the flagellum. It is found in the cytoplasm. The protein resides in the cytoskeleton. The protein localises to the flagellum axoneme. Functionally, force generating protein of eukaryotic cilia and flagella. Produces force towards the minus ends of microtubules. Dynein has ATPase activity; the force-producing power stroke is thought to occur on release of ADP. The polypeptide is Dynein beta chain, ciliary (Tripneustes gratilla (Hawaian sea urchin)).